Reading from the N-terminus, the 140-residue chain is Nucleoside diphosphate kinase (140 aa).

Positions 11, 59, 87, 93, 104, and 114 each coordinate ATP. Histidine 117 acts as the Pros-phosphohistidine intermediate in catalysis.

The protein belongs to the NDK family. Homotetramer. It depends on Mg(2+) as a cofactor.

Its subcellular location is the cytoplasm. The enzyme catalyses a 2'-deoxyribonucleoside 5'-diphosphate + ATP = a 2'-deoxyribonucleoside 5'-triphosphate + ADP. It carries out the reaction a ribonucleoside 5'-diphosphate + ATP = a ribonucleoside 5'-triphosphate + ADP. Major role in the synthesis of nucleoside triphosphates other than ATP. The ATP gamma phosphate is transferred to the NDP beta phosphate via a ping-pong mechanism, using a phosphorylated active-site intermediate. This chain is Nucleoside diphosphate kinase, found in Rhodospirillum rubrum (strain ATCC 11170 / ATH 1.1.1 / DSM 467 / LMG 4362 / NCIMB 8255 / S1).